The sequence spans 463 residues: Ribosomal protein uS12 methylthiotransferase RimO (463 aa).

The interval 1–26 (MPAMSQNPPLLRPDLAPAPIFDTSRR) is disordered. A compositionally biased stretch (low complexity) spans 8–19 (PPLLRPDLAPAP). One can recognise an MTTase N-terminal domain in the interval 30–140 (PTIGMVSLGC…VLDAVHHAVP (111 aa)). The [4Fe-4S] cluster site is built by C39, C75, C104, C171, C175, and C178. The Radical SAM core domain maps to 157–395 (LTPRHYSYLK…MQKAQAISEA (239 aa)). The 66-residue stretch at 398 to 463 (AAKVGHRIEV…AGEYDLWGRL (66 aa)) folds into the TRAM domain.

Belongs to the methylthiotransferase family. RimO subfamily. Requires [4Fe-4S] cluster as cofactor.

Its subcellular location is the cytoplasm. It catalyses the reaction L-aspartate(89)-[ribosomal protein uS12]-hydrogen + (sulfur carrier)-SH + AH2 + 2 S-adenosyl-L-methionine = 3-methylsulfanyl-L-aspartate(89)-[ribosomal protein uS12]-hydrogen + (sulfur carrier)-H + 5'-deoxyadenosine + L-methionine + A + S-adenosyl-L-homocysteine + 2 H(+). Its function is as follows. Catalyzes the methylthiolation of an aspartic acid residue of ribosomal protein uS12. The chain is Ribosomal protein uS12 methylthiotransferase RimO from Paracoccus denitrificans (strain Pd 1222).